Reading from the N-terminus, the 146-residue chain is MLFFGTYDHNLDDKQRLTIPSKMRNKILNSTVYVSKGFEGSLEMRTEEEFEKWSSQILNLSSFNKETRMITREIIANTHEVEIDKIGRIKIPNNLLKLANIEKSVYILGMGDRVEIWDQKSYDNYQNDNSDRMEEIAETIYQGLNK.

2 SpoVT-AbrB domains span residues Thr6 to Glu49 and Thr78 to Ser121.

This sequence belongs to the MraZ family. In terms of assembly, forms oligomers.

The protein localises to the cytoplasm. It is found in the nucleoid. The sequence is that of Transcriptional regulator MraZ from Mesoplasma florum (strain ATCC 33453 / NBRC 100688 / NCTC 11704 / L1) (Acholeplasma florum).